A 553-amino-acid polypeptide reads, in one-letter code: Protein PNS1 (553 aa).

Over residues 1-17 (MYGKSGPPPEGYVPQHP) the composition is skewed to pro residues. Positions 1 to 49 (MYGKSGPPPEGYVPQHPPAQGYAPHNPPPGYVHENPFQEPVPQGQEYSP) are disordered. Residues 1-95 (MYGKSGPPPE…AGNRLKFNDW (95 aa)) lie on the Cytoplasmic side of the membrane. The helical transmembrane segment at 96-116 (PFTIIFLLTVGAFIAVAVLTL) threads the bilayer. Residues 117-143 (RGWSLSPTSNGSGIYDGDNTHTLNTNA) lie on the Extracellular side of the membrane. N-linked (GlcNAc...) asparagine glycosylation is present at asparagine 126. Residues 144–164 (AILLLISCGVAVALSVFGLVL) traverse the membrane as a helical segment. Residues 165 to 170 (AGMYTK) lie on the Cytoplasmic side of the membrane. A helical transmembrane segment spans residues 171 to 191 (FFIYAAMILNTVVGLGTAITY). The Extracellular portion of the chain corresponds to 192–196 (LVLRH). The chain crosses the membrane as a helical span at residues 197 to 217 (WSAGIVFMIFTILTAVCYWLM). Over 218-243 (RSRIPFSVAVLRTVMSVMKKHPQTWL) the chain is Cytoplasmic. A helical transmembrane segment spans residues 244-264 (VSLLGTIVSAAFSVIFSVVLV). The Extracellular segment spans residues 265-288 (ATYIKYDPKSENGGCDVSGGSCSR). A helical transmembrane segment spans residues 289–309 (GKLIGILVLVFFCGFYISEVI). Topologically, residues 310–346 (RNVIHCTIAGIYGCWYYFSKSDQGMPRWPAFGSLKRA) are cytoplasmic. A helical membrane pass occupies residues 347-367 (LTTSFGSICFGSLIVSLIQLL). The Extracellular segment spans residues 368–385 (RQIIQLLRNGIISGISDS). Residues 386–406 (GWMQCLWLILDAVVGVFEWMA) form a helical membrane-spanning segment. Residues 407-450 (EYFNHYAYCFIALYGKPYLRAAKETWHMLREKGIDALINDNLIN) lie on the Cytoplasmic side of the membrane. A helical transmembrane segment spans residues 451-471 (LALGFYTLFVGYTTALFSYLF). Over 472–483 (LRFTKPDYNSGG) the chain is Extracellular. The chain crosses the membrane as a helical span at residues 484–504 (GFNAVLMAFSFLIAIQLTHVA). Residues 505–553 (TETIRSGTATFFVALGNDPEIFRVSYPQRFDEIFRAYPDVLNKLSHQHV) lie on the Cytoplasmic side of the membrane.

It belongs to the CTL (choline transporter-like) family.

The protein localises to the cell membrane. In terms of biological role, probably involved in transport through the plasma membrane. The chain is Protein PNS1 (PNS1) from Eremothecium gossypii (strain ATCC 10895 / CBS 109.51 / FGSC 9923 / NRRL Y-1056) (Yeast).